A 296-amino-acid polypeptide reads, in one-letter code: Thymidylate synthase (296 aa).

DUMP contacts are provided by residues R24 and 151-152 (RR). The active-site Nucleophile is C171. DUMP contacts are provided by residues 197 to 200 (RSAD), N208, and 238 to 240 (HVY). A (6R)-5,10-methylene-5,6,7,8-tetrahydrofolate-binding site is contributed by D200.

This sequence belongs to the thymidylate synthase family. As to quaternary structure, homodimer.

The catalysed reaction is dUMP + (6R)-5,10-methylene-5,6,7,8-tetrahydrofolate = 7,8-dihydrofolate + dTMP. It functions in the pathway pyrimidine metabolism; dTTP biosynthesis. The chain is Thymidylate synthase (tms1) from Agaricus bisporus (White button mushroom).